Consider the following 364-residue polypeptide: Mannitol-1-phosphate 5-dehydrogenase (364 aa).

Residue 6-17 (VLHFGAGNIGRG) coordinates NAD(+).

This sequence belongs to the mannitol dehydrogenase family.

The catalysed reaction is D-mannitol 1-phosphate + NAD(+) = beta-D-fructose 6-phosphate + NADH + H(+). In Mycoplasma pneumoniae (strain ATCC 29342 / M129 / Subtype 1) (Mycoplasmoides pneumoniae), this protein is Mannitol-1-phosphate 5-dehydrogenase (mtlD).